A 434-amino-acid polypeptide reads, in one-letter code: Maltoporin (434 aa).

Positions 1–25 (MKMKAKWLPIAAAVTAALASQAAFA) are cleaved as a signal peptide.

The protein belongs to the porin LamB (TC 1.B.3) family. As to quaternary structure, homotrimer formed of three 18-stranded antiparallel beta-barrels, containing three independent channels.

It localises to the cell outer membrane. It carries out the reaction beta-maltose(in) = beta-maltose(out). Functionally, involved in the transport of maltose and maltodextrins. The polypeptide is Maltoporin (Aeromonas hydrophila).